The sequence spans 234 residues: Peptidyl-prolyl cis-trans isomerase FKBP17-3, chloroplastic (234 aa).

A chloroplast-targeting transit peptide spans 1-28 (MATLFTATVPSHHRFVSPSQHPKQSLLS). In terms of domain architecture, PPIase FKBP-type spans 130-228 (GYLVVFDVKG…DYIIEVDTVY (99 aa)).

Belongs to the FKBP-type PPIase family.

Its subcellular location is the plastid. It is found in the chloroplast thylakoid lumen. The catalysed reaction is [protein]-peptidylproline (omega=180) = [protein]-peptidylproline (omega=0). PPIases accelerate the folding of proteins. It catalyzes the cis-trans isomerization of proline imidic peptide bonds in oligopeptides. The polypeptide is Peptidyl-prolyl cis-trans isomerase FKBP17-3, chloroplastic (FKBP17-3) (Arabidopsis thaliana (Mouse-ear cress)).